Reading from the N-terminus, the 377-residue chain is Stimulator of interferon genes protein (377 aa).

Topologically, residues 1 to 21 (MRRAEENNGFGTIPKRRNQHT) are cytoplasmic. Residues 22–42 (PFYASIGMIVVIIVAFTSYHI) traverse the membrane as a helical segment. Over 43–57 (TSYGDDRNRAMRQYS) the chain is Extracellular. The chain crosses the membrane as a helical span at residues 58–80 (FTFSLAYLAFLVGELLRRCCLFA). Over 81 to 101 (EEYRHIETRYNGSLKKAIQTT) the chain is Cytoplasmic. A helical transmembrane segment spans residues 102–122 (FSFGHNNVLFVASLLFFVVFV). Residues 123–154 (ASNDPNGSSSVIQGNSTAEPHTEMRQTSGWQG) lie on the Extracellular side of the membrane. The chain crosses the membrane as a helical span at residues 155-175 (LWGQFIISALLTPLVVHLLGL). Residues 176–377 (RELSKVEESQ…LKDSELEIGG (202 aa)) lie on the Cytoplasmic side of the membrane. 2',3'-cGAMP contacts are provided by residues tyrosine 206, arginine 272, 278–279 (RH), and threonine 303. Residues tyrosine 206, arginine 272, arginine 278, and 300-303 (EYAT) contribute to the 3',3'-c-di-GMP site.

Belongs to the TMEM173 family. Homodimer.

The protein localises to the endoplasmic reticulum membrane. Sensor of cytosolic DNA from bacteria and viruses that promotes autophagy. Acts by recognizing and binding cyclic GMP-AMP (cGAMP), a messenger produced by CGAS in response to DNA in the cytosol. Following cGAMP-binding, promotes the formation of autophagosomes, leading to target cytosolic DNA for degradation by the lysosome. Exhibits guanine base-specific ligand recognition. Binds 3'-3'linked cGAMP, 2'-3' linked cGAMP and 3'-3' linked c-di-GMP with much greater affinity as compared to 3'-3' linked c-di-AMP. Lacks the C-terminal tail (CTT) found in mammalian orthologs which is essential for interferon signaling. This is Stimulator of interferon genes protein from Nematostella vectensis (Starlet sea anemone).